Consider the following 61-residue polypeptide: Large ribosomal subunit protein bL32 (61 aa).

The interval 1–44 is disordered; sequence MAVQQNRKSRSRRDMRRSHDALTENALTVDQTTGETHRRHHVTK. Residues 7–16 are compositionally biased toward basic residues; it reads RKSRSRRDMR. Over residues 25–34 the composition is skewed to polar residues; the sequence is NALTVDQTTG.

It belongs to the bacterial ribosomal protein bL32 family.

This chain is Large ribosomal subunit protein bL32, found in Acinetobacter baylyi (strain ATCC 33305 / BD413 / ADP1).